The following is a 300-amino-acid chain: 33 kDa chaperonin (300 aa).

2 cysteine pairs are disulfide-bonded: cysteine 247–cysteine 249 and cysteine 280–cysteine 283.

The protein belongs to the HSP33 family. Post-translationally, under oxidizing conditions two disulfide bonds are formed involving the reactive cysteines. Under reducing conditions zinc is bound to the reactive cysteines and the protein is inactive.

The protein resides in the cytoplasm. Redox regulated molecular chaperone. Protects both thermally unfolding and oxidatively damaged proteins from irreversible aggregation. Plays an important role in the bacterial defense system toward oxidative stress. This Prochlorococcus marinus (strain MIT 9515) protein is 33 kDa chaperonin.